Consider the following 244-residue polypeptide: DNA repair protein RecO (244 aa).

This sequence belongs to the RecO family.

Functionally, involved in DNA repair and RecF pathway recombination. The chain is DNA repair protein RecO from Geobacter metallireducens (strain ATCC 53774 / DSM 7210 / GS-15).